A 91-amino-acid polypeptide reads, in one-letter code: MAHTQEEIIAELGQIVEEVTGIEPSEVTVDKSFVDDLDIDSLSMVEIAVQTEDKYGVKVPDEDLAGLRTVGDIVAYIQKLEAEGAEAKNAE.

A Carrier domain is found at 6–81 (EEIIAELGQI…DIVAYIQKLE (76 aa)). Position 41 is an O-(pantetheine 4'-phosphoryl)serine (Ser-41).

This sequence belongs to the acyl carrier protein (ACP) family. Post-translationally, 4'-phosphopantetheine is transferred from CoA to a specific serine of apo-ACP by AcpS. This modification is essential for activity because fatty acids are bound in thioester linkage to the sulfhydryl of the prosthetic group.

Its subcellular location is the cytoplasm. It participates in lipid metabolism; fatty acid biosynthesis. In terms of biological role, carrier of the growing fatty acid chain in fatty acid biosynthesis. The protein is Acyl carrier protein of Rhodococcus erythropolis (strain PR4 / NBRC 100887).